The sequence spans 364 residues: Peptidoglycan transport system permease protein YejB (364 aa).

A run of 6 helical transmembrane segments spans residues 9-29 (LALM…VIQF), 134-154 (SASL…PLGI), 171-191 (IIII…IVLF), 219-239 (IIDY…SAFA), 283-303 (IVIA…SLLI), and 325-345 (YPIV…VGLL). Residues 131-350 (LPVSASLGFW…VVGLLSDLIY (220 aa)) enclose the ABC transmembrane type-1 domain.

It belongs to the binding-protein-dependent transport system permease family. In terms of assembly, the complex is composed of one ATP-binding protein (YejF), two transmembrane proteins (YejB and YejE) and a solute-binding protein (YepA or YejA).

It is found in the cell inner membrane. Its function is as follows. Part of the ABC transporter complex YejBEF-YepA involved in the uptake of muropeptides, the breakdown products of cell wall peptidoglycan. The import of muropeptides into the cell enables peptidoglycan recycling, which is vital for cell wall integrity in this bacterium. Is also probably part of the ABC transporter complex YejABEF, which is likely involved in broad-spectrum peptide import. Responsible for the translocation of the substrate across the membrane. The chain is Peptidoglycan transport system permease protein YejB from Agrobacterium fabrum (strain C58 / ATCC 33970) (Agrobacterium tumefaciens (strain C58)).